Reading from the N-terminus, the 233-residue chain is Aspartate/glutamate leucyltransferase (233 aa).

Belongs to the R-transferase family. Bpt subfamily.

It localises to the cytoplasm. The enzyme catalyses N-terminal L-glutamyl-[protein] + L-leucyl-tRNA(Leu) = N-terminal L-leucyl-L-glutamyl-[protein] + tRNA(Leu) + H(+). It catalyses the reaction N-terminal L-aspartyl-[protein] + L-leucyl-tRNA(Leu) = N-terminal L-leucyl-L-aspartyl-[protein] + tRNA(Leu) + H(+). In terms of biological role, functions in the N-end rule pathway of protein degradation where it conjugates Leu from its aminoacyl-tRNA to the N-termini of proteins containing an N-terminal aspartate or glutamate. This Vibrio campbellii (strain ATCC BAA-1116) protein is Aspartate/glutamate leucyltransferase.